A 161-amino-acid chain; its full sequence is Nucleotide-binding protein Bamb_2603 (161 aa).

This sequence belongs to the YajQ family.

In terms of biological role, nucleotide-binding protein. The protein is Nucleotide-binding protein Bamb_2603 of Burkholderia ambifaria (strain ATCC BAA-244 / DSM 16087 / CCUG 44356 / LMG 19182 / AMMD) (Burkholderia cepacia (strain AMMD)).